We begin with the raw amino-acid sequence, 168 residues long: Large ribosomal subunit protein uL10 (168 aa).

It belongs to the universal ribosomal protein uL10 family. Part of the ribosomal stalk of the 50S ribosomal subunit. The N-terminus interacts with L11 and the large rRNA to form the base of the stalk. The C-terminus forms an elongated spine to which L12 dimers bind in a sequential fashion forming a multimeric L10(L12)X complex.

Forms part of the ribosomal stalk, playing a central role in the interaction of the ribosome with GTP-bound translation factors. The protein is Large ribosomal subunit protein uL10 of Ralstonia pickettii (strain 12J).